Consider the following 247-residue polypeptide: NCT transcriptional regulatory complex subunit A (247 aa).

Over residues 1-12 (MTDQDSTYRPRS) the composition is skewed to basic and acidic residues. Disordered regions lie at residues 1–31 (MTDQ…SPIY), 48–82 (FFAP…SPDM), and 212–247 (VPDQ…DDSD). The segment covering 13-22 (PDLSTFQSSI) has biased composition (polar residues).

Belongs to the NC2 alpha/DRAP1 family. As to quaternary structure, forms the NCT transcriptional regulatory complex with nctB and mot1.

The protein localises to the nucleus. In terms of biological role, part of the NCT transcriptional regulatory complex that acts as a key regulator of ergosterol biosynthesis and the azole exporter cdr1B. The NCT complex binds the promoters of genes linked to azole susceptibility, and especially represses the expression of cdr1B transporter. The chain is NCT transcriptional regulatory complex subunit A from Aspergillus fumigatus (strain CBS 144.89 / FGSC A1163 / CEA10) (Neosartorya fumigata).